The chain runs to 89 residues: MSKKCALTGRKPRRGYSYAIRGISKKKKGIGLKVTGRTKRRFFPNIMTKRLWSTEENRFLKLKISAAALRLVDKLGLDQVVARAKSKGF.

This sequence belongs to the bacterial ribosomal protein bL28 family.

This is Large ribosomal subunit protein bL28 from Chlamydia trachomatis serovar A (strain ATCC VR-571B / DSM 19440 / HAR-13).